A 480-amino-acid polypeptide reads, in one-letter code: Trigger factor (480 aa).

One can recognise a PPIase FKBP-type domain in the interval 161-249; sequence GDRLLITGKF…VVEVLKEQLP (89 aa). The tract at residues 426–480 is disordered; it reads TEEPVEKEAEEKNEEFAIDHEVLPTKDHDAIPAAKYDDNTPKGAETEDKQEKDKD. The span at 429–480 shows a compositional bias: basic and acidic residues; the sequence is PVEKEAEEKNEEFAIDHEVLPTKDHDAIPAAKYDDNTPKGAETEDKQEKDKD.

The protein belongs to the FKBP-type PPIase family. Tig subfamily.

It localises to the cytoplasm. The catalysed reaction is [protein]-peptidylproline (omega=180) = [protein]-peptidylproline (omega=0). In terms of biological role, involved in protein export. Acts as a chaperone by maintaining the newly synthesized protein in an open conformation. Functions as a peptidyl-prolyl cis-trans isomerase. The sequence is that of Trigger factor from Rhodopirellula baltica (strain DSM 10527 / NCIMB 13988 / SH1).